An 81-amino-acid polypeptide reads, in one-letter code: Cytotoxin 1 (81 aa).

An N-terminal signal peptide occupies residues 1–21 (MKTLLLTLVVVTIVCLDLGYT). 4 cysteine pairs are disulfide-bonded: Cys-24/Cys-42, Cys-35/Cys-59, Cys-63/Cys-74, and Cys-75/Cys-80.

Belongs to the three-finger toxin family. Short-chain subfamily. Type IA cytotoxin sub-subfamily. As to quaternary structure, monomer in solution; homodimer and oligomer in the presence of negatively charged lipids forming a pore with a size ranging between 20 and 30 Angstroms. Expressed by the venom gland.

Its subcellular location is the secreted. It localises to the target cell membrane. Shows cytolytic activity on many different cells by forming pores in lipid membranes. Exhibits concentration-dependent growth inhibitory effects in the lung cell lines A549 (IC(50)= 0.88) and NL20 (IC(50)= 1.91), in the prostate cell lines PC-3 (IC(50)= 3.13 ug/ml) and RWPE-1 (IC(50)=0.35 ug/ml), and in the breast cell lines MCF-7 (IC(50)= 9.10 ug/ml) and 184B5 (IC(50)=6.21 ug/ml), with high selectivity for the lung cancer cell line A549 (selectivity index=2.17). Induces primarily necrosis in the A549 lung cancer cell line, and mainly caspase-independent late apoptosis in the breast cancer cells line MCF-7 and in the prostate cancer cell line PC-3. The sequence is that of Cytotoxin 1 from Naja sumatrana (Equatorial spitting cobra).